The following is a 367-amino-acid chain: Molybdopterin synthase catalytic subunit (367 aa).

Substrate-binding positions include 101–102 (HR), Lys117, and 124–126 (KKE). Residues 326 to 345 (HFTKREPSSMEAAPPKKIRK) form a disordered region.

It belongs to the MoaE family. MOCS2B subfamily. In terms of assembly, heterotetramer; composed of 2 small (Mocs2A) and 2 large (Mocs2B) subunits.

It is found in the cytoplasm. It catalyses the reaction 2 [molybdopterin-synthase sulfur-carrier protein]-C-terminal-Gly-aminoethanethioate + cyclic pyranopterin phosphate + H2O = molybdopterin + 2 [molybdopterin-synthase sulfur-carrier protein]-C-terminal Gly-Gly + 2 H(+). Its pathway is cofactor biosynthesis; molybdopterin biosynthesis. Catalytic subunit of the molybdopterin synthase complex, a complex that catalyzes the conversion of precursor Z into molybdopterin. Acts by mediating the incorporation of 2 sulfur atoms from thiocarboxylated Mocs2A into precursor Z to generate a dithiolene group. The polypeptide is Molybdopterin synthase catalytic subunit (Drosophila sechellia (Fruit fly)).